An 84-amino-acid chain; its full sequence is Exodeoxyribonuclease 7 small subunit (84 aa).

It belongs to the XseB family. In terms of assembly, heterooligomer composed of large and small subunits.

It is found in the cytoplasm. It catalyses the reaction Exonucleolytic cleavage in either 5'- to 3'- or 3'- to 5'-direction to yield nucleoside 5'-phosphates.. Bidirectionally degrades single-stranded DNA into large acid-insoluble oligonucleotides, which are then degraded further into small acid-soluble oligonucleotides. This chain is Exodeoxyribonuclease 7 small subunit, found in Yersinia pseudotuberculosis serotype O:1b (strain IP 31758).